A 179-amino-acid polypeptide reads, in one-letter code: Enhancer of split m8 protein (179 aa).

The bHLH domain occupies 10 to 65 (YQKVKKPMLERQRRARMNKCLDNLKTLVAELRGDDGILRMDKAEMLESAVIFMRQQ). The region spanning 83-116 (FKNGYMNAVNEVSRVMASTPGMSVDLGKSVMTHL) is the Orange domain. The segment at 146 to 179 (DKAPLSPASSGYHSDCDSPAPSPQPMQQPLWRPW) is disordered. The WRPW motif signature appears at 176–179 (WRPW).

Homodimer. Heterodimers with dpn. Transcription repression requires formation of a complex with a corepressor protein (Groucho).

It is found in the nucleus. Functionally, participates in the control of cell fate choice by uncommitted neuroectodermal cells in the embryo. Transcriptional repressor. Binds DNA on N-box motifs: 5'-CACNAG-3'. Part of the Notch signaling pathway. This chain is Enhancer of split m8 protein, found in Drosophila melanogaster (Fruit fly).